Here is a 529-residue protein sequence, read N- to C-terminus: MVAQKSVSNATFKNKEKPQEVRRANIVAARAVADAIRTSLGPKGMDKMIKTSRGEIIISNDGHTILKQMAILHPVAKMLVDVSAAQDSEAGDGTTSVVILTGALLGAADRLLNKGIHPTIIAESFQKAARRSVETLLEICHPVSLDDREDLIRAASTSLSSKIVSQYSSFLSPLAVDAVLSITEKDSKTVDLNDIRLVKKVGGTIGDTEMVDGVVLTQTVVKTAGGPTMKEKAKIGLIQFQISPPKPDTENNIVVSDYRQMDKILKEERAYLLNICKKIKKAKCNVLLIQKSILRDAVNDLALHFLAKLGIMVIKDIEREEIEFLSKSLGCKPISDVELFTEDRLGSADLVEEIDSDGTKIVKFSGVKGVNAKPTVSVIIRGANSMILDETERSLHDALCVIRCLVKERGLIAGGGAPEIEISRRLERESRSMEGVEAYIWQEFAQALEVIPTTLAENAGLNSIKVITELRSRHENGDVNEGISVRRSGTTNTYEEHILQPVLVSTSAITLASECVKSILRIDDITFSR.

Belongs to the TCP-1 chaperonin family. In terms of assembly, heterooligomeric complex of about 850 to 900 kDa that forms two stacked rings, 12 to 16 nm in diameter.

The protein resides in the cytoplasm. Functionally, molecular chaperone; assists the folding of proteins upon ATP hydrolysis. Known to play a role, in vitro, in the folding of actin and tubulin. This chain is T-complex protein 1 subunit delta (CCT4), found in Candida glabrata (strain ATCC 2001 / BCRC 20586 / JCM 3761 / NBRC 0622 / NRRL Y-65 / CBS 138) (Yeast).